The sequence spans 801 residues: Mitochondrial intermediate peptidase (801 aa).

The transit peptide at 1 to 41 (MKPQLLTPLRRRPWTCRQCLQRLQRLQQQTRRSFETAASPA) directs the protein to the mitochondrion. The tract at residues 31–54 (RRSFETAASPAPGHTQVDYIPADA) is disordered. Zn(2+) is bound at residue histidine 565. The active site involves glutamate 566. Zn(2+)-binding residues include histidine 569 and histidine 572.

The protein belongs to the peptidase M3 family. The cofactor is Zn(2+).

Its subcellular location is the mitochondrion matrix. It catalyses the reaction Release of an N-terminal octapeptide as second stage of processing of some proteins imported into the mitochondrion.. Functionally, cleaves proteins, imported into the mitochondrion, to their mature size. While most mitochondrial precursor proteins are processed to the mature form in one step by mitochondrial processing peptidase (MPP), the sequential cleavage by MIP of an octapeptide after initial processing by MPP is a required step for a subgroup of nuclear-encoded precursor proteins destined for the matrix or the inner membrane. In Aspergillus clavatus (strain ATCC 1007 / CBS 513.65 / DSM 816 / NCTC 3887 / NRRL 1 / QM 1276 / 107), this protein is Mitochondrial intermediate peptidase (oct1).